Reading from the N-terminus, the 215-residue chain is Probable nicotinate-nucleotide adenylyltransferase (215 aa).

It belongs to the NadD family.

It catalyses the reaction nicotinate beta-D-ribonucleotide + ATP + H(+) = deamido-NAD(+) + diphosphate. It participates in cofactor biosynthesis; NAD(+) biosynthesis; deamido-NAD(+) from nicotinate D-ribonucleotide: step 1/1. In terms of biological role, catalyzes the reversible adenylation of nicotinate mononucleotide (NaMN) to nicotinic acid adenine dinucleotide (NaAD). The sequence is that of Probable nicotinate-nucleotide adenylyltransferase from Coxiella burnetii (strain Dugway 5J108-111).